A 245-amino-acid polypeptide reads, in one-letter code: 1-(5-phosphoribosyl)-5-[(5-phosphoribosylamino)methylideneamino] imidazole-4-carboxamide isomerase (245 aa).

The active-site Proton acceptor is aspartate 8. The active-site Proton donor is aspartate 131.

Belongs to the HisA/HisF family.

The protein localises to the cytoplasm. It catalyses the reaction 1-(5-phospho-beta-D-ribosyl)-5-[(5-phospho-beta-D-ribosylamino)methylideneamino]imidazole-4-carboxamide = 5-[(5-phospho-1-deoxy-D-ribulos-1-ylimino)methylamino]-1-(5-phospho-beta-D-ribosyl)imidazole-4-carboxamide. It functions in the pathway amino-acid biosynthesis; L-histidine biosynthesis; L-histidine from 5-phospho-alpha-D-ribose 1-diphosphate: step 4/9. This Neisseria gonorrhoeae (strain ATCC 700825 / FA 1090) protein is 1-(5-phosphoribosyl)-5-[(5-phosphoribosylamino)methylideneamino] imidazole-4-carboxamide isomerase.